Reading from the N-terminus, the 555-residue chain is MAISSIFLLSLFSLIYVIPIEATHHVYQTLETLSSHHSSKSNHQPYRTAYHFQPLKNWINDPNGPMRYGGFYHLFYQYNPKGAVWGNIVWAHSVSKDLVNWTPLDHAIHPSQPSDIKGCWSGSATILPGGKPAILYTGIDPNNHQVQNIAIPKNMSDPLLREWKKSPKNPLMEPTIANKINSSSFRDPTTSWLGKDGFWRVLIGSKIDTKGMAILYKSKNFVDWVEAKHPLHSAEGTGMWECPDFYPVLDKNLLRTGVDTSRNGDDDVRHVLKVSLDDTKHDHYLIGSYDVVKDVFVPENGFEDNGFVLRYDYGKYYASKTFFDDGKNRRILLGWVNESSSVADDVKKGWSGIHTIPREIWLHESGKQLVQWPVKEIENLRMNPVNWPTKVIKGGERISITGVDSVQADVEISFEISDLGKVESLRKWIDPQLLCSQKGAGVKGGVGPFGLLVFASQGLKEYTAVFFRIFKYQDKNLVLMCSDQSRSSLNKDNDMTSYGTFVDVDPLHEKLSLRTLIDHSVVESFGGEGRACVTARVYPTLAIHDKAMLKLTSEY.

The first 22 residues, 1-22 (MAISSIFLLSLFSLIYVIPIEA), serve as a signal peptide directing secretion. Substrate-binding positions include 58–61 (WIND), Gln-77, Trp-85, and 120–121 (WS). Residue Asp-61 is part of the active site. The active site involves Asp-140. Asn-154 and Asn-181 each carry an N-linked (GlcNAc...) asparagine glycan. Residues 186-187 (RD), Glu-241, and Asp-277 each bind substrate. Asn-337 carries an N-linked (GlcNAc...) asparagine glycan. Cys-435 and Cys-481 are disulfide-bonded.

It belongs to the glycosyl hydrolase 32 family.

It carries out the reaction Hydrolysis of terminal non-reducing beta-D-fructofuranoside residues in beta-D-fructofuranosides.. This chain is Beta-fructofuranosidase, cell wall isozyme (BFRUCT1), found in Pisum sativum (Garden pea).